A 143-amino-acid polypeptide reads, in one-letter code: Transcriptional regulator MraZ (143 aa).

2 consecutive SpoVT-AbrB domains span residues 5 to 47 and 76 to 119; these read EYNH…SMDE and ATEC…SSDQ.

The protein belongs to the MraZ family. As to quaternary structure, forms oligomers.

The protein resides in the cytoplasm. It localises to the nucleoid. The polypeptide is Transcriptional regulator MraZ (Alkaliphilus metalliredigens (strain QYMF)).